We begin with the raw amino-acid sequence, 412 residues long: Class E basic helix-loop-helix protein 40 (412 aa).

Residues 1–139 (MERIPSAQPP…LSGRNVETGQ (139 aa)) form an essential for interaction with BMAL1, E-box binding and repressor activity against the CLOCK-BMAL1 heterodimer region. The bHLH domain maps to 52–107 (TYKLPHRLIEKKRRDRINECIAQLKDLLPEHLKLTTLGHLEKAVVLELTLKHVKAL). Positions 75-79 (LKDLL) are necessary for interaction with RXRA and repressor activity against RXRA. The Orange domain maps to 142–175 (FCSGFQTCAREVLQYLAKHENTRDLKSSQLVTHL). K159 is covalently cross-linked (Glycyl lysine isopeptide (Lys-Gly) (interchain with G-Cter in SUMO1, SUMO2 and SUMO3)). K167 is covalently cross-linked (Glycyl lysine isopeptide (Lys-Gly) (interchain with G-Cter in SUMO2)). The disordered stretch occupies residues 182–303 (LLQGGTSRKP…LSDDEGHFTS (122 aa)). S235 carries the post-translational modification Phosphoserine. The span at 248 to 271 (ESEKGDLRSEQPCFKSDHGRRFTM) shows a compositional bias: basic and acidic residues. K279 is covalently cross-linked (Glycyl lysine isopeptide (Lys-Gly) (interchain with G-Cter in SUMO1); alternate). A Glycyl lysine isopeptide (Lys-Gly) (interchain with G-Cter in SUMO1, SUMO2 and SUMO3); alternate cross-link involves residue K279. K279 participates in a covalent cross-link: Glycyl lysine isopeptide (Lys-Gly) (interchain with G-Cter in SUMO2); alternate. Residue K288 forms a Glycyl lysine isopeptide (Lys-Gly) (interchain with G-Cter in SUMO2) linkage. A Phosphoserine modification is found at S383.

In terms of assembly, homodimer. Heterodimer with BHLHE41/DEC2. Interacts with TCF3/E47. Interacts with ubiquitin-conjugating enzyme UBE2I/UBC9. Interacts with HDAC1, SUMO1, RXRA and BMAL1. Post-translationally, ubiquitinated; which may lead to proteasomal degradation. In terms of processing, sumoylation inhibits its ubiquitination and promotes its negative regulation of the CLOCK-BMAL1 heterodimer transcriptional activator activity. Expressed in cartilage, spleen, intestine, lung, and to a lesser extent in heart, brain, liver, muscle and stomach.

It localises to the cytoplasm. Its subcellular location is the nucleus. Transcriptional repressor involved in the regulation of the circadian rhythm by negatively regulating the activity of the clock genes and clock-controlled genes. Acts as the negative limb of a novel autoregulatory feedback loop (DEC loop) which differs from the one formed by the PER and CRY transcriptional repressors (PER/CRY loop). Both these loops are interlocked as it represses the expression of PER1/2 and in turn is repressed by PER1/2 and CRY1/2. Represses the activity of the circadian transcriptional activator: CLOCK-BMAL1|BMAL2 heterodimer by competing for the binding to E-box elements (5'-CACGTG-3') found within the promoters of its target genes. Negatively regulates its own expression and the expression of DBP and BHLHE41/DEC2. Acts as a corepressor of RXR and the RXR-LXR heterodimers and represses the ligand-induced RXRA and NR1H3/LXRA transactivation activity. May be involved in the regulation of chondrocyte differentiation via the cAMP pathway. Represses the transcription of NR0B2 and attentuates the transactivation of NR0B2 by the CLOCK-BMAL1 complex. Drives the circadian rhythm of blood pressure through transcriptional repression of ATP1B1 in the cardiovascular system. This chain is Class E basic helix-loop-helix protein 40 (BHLHE40), found in Homo sapiens (Human).